Consider the following 429-residue polypeptide: Glutamyl-tRNA reductase (429 aa).

Residues 56–59, Ser119, 124–126, and Gln130 each bind substrate; these read TCNR and EPQ. Cys57 serves as the catalytic Nucleophile. 199–204 contacts NADP(+); the sequence is GAGEMI.

Belongs to the glutamyl-tRNA reductase family. As to quaternary structure, homodimer.

The enzyme catalyses (S)-4-amino-5-oxopentanoate + tRNA(Glu) + NADP(+) = L-glutamyl-tRNA(Glu) + NADPH + H(+). It participates in porphyrin-containing compound metabolism; protoporphyrin-IX biosynthesis; 5-aminolevulinate from L-glutamyl-tRNA(Glu): step 1/2. Functionally, catalyzes the NADPH-dependent reduction of glutamyl-tRNA(Glu) to glutamate 1-semialdehyde (GSA). This chain is Glutamyl-tRNA reductase, found in Herminiimonas arsenicoxydans.